We begin with the raw amino-acid sequence, 1048 residues long: MQETFKFLRCNSQGEAVEDKYSLKTLKNHFVVRDEYNNLFRVFSSRDDFWEWEADQPFEQKCFHEVVFGFFPQRLKFDIDFPVNKSYSEEDNDDNVYNILDIIINVIMDVFYETYSLPYNINLTREQILLTDSIGLNKKRELKYSFHIILYTYSVLNNNEAKAFTSKVLENLPKHVYPFVDPQVNKSIQNFRIIGSHKKGSMRVKMFNEELADVFETSMTTKKSDTLITTPFETTCLPCILTHVKEMTNSCDSIQQNELEEVLKFAGVLCKNHCFLRVHKNLVLFKRTSPSYCEICKRMHDKDNTLILRVAGNKVYQHCRHDNKHSLLMGSLSGTTNFVEIYVDQVMTKSIEVHESILFEELPDTQKHIYDESSMREYERVPTLVVKAQMKIGKTIQLRNYLQKYYGNDSISKQQTIRFVTFRQIFSKNIQTRLPNFTLYSEVTGDLDSYERVIIQVESLFRLTSTAEPVDLLILDEVESIFNQFNSGLHKYFAPSFAIFMWMLETANHVICLDANLGNRTYNILQRFRGDVPIFFHWNQYQKAQNDMYYFTSSREIWLNNLLKDLLEDKKIVIPTNSLMEARLLQTFIQKKFPEKKIGFYSSKSTAHERESHFNNVSYYWGLIDILIYTPTISAGVSYEDKRFDVLYGFFNNMSCDVETCCQMLGRVRELKSKTYKICLQGKQNYFPETIEDIETFTLQKRDTLFQTINNHQLSFTYSKETGRPIYYKTPYYHLWLETMRIQHLSKNHFITRFINQVADTGAKVFILTGEKLETVKQYTSIKMEIKHQDYVNIASAETIDANKALLIKQNLKEGITVDQQDLFAYEKYKLLEFYAWHGNKITPKFVEQYNSFMTKQNYTGRVQISRGKTVHESLTMLQTQELNFHQWAMQHAEHHDLQFNYSFQSHMYAIMLLTKCGFKCVQDPNILTNEQLMTKLVDEFVQYDLSAVSFEFKLKKPNKMDPQTILKFINKVLGIRYGLKIHHNKGNYYIKNTKAGSLIPFVRQQIKQSPCVVSNLLPITETFSTKEESSPTREETSSIKEKTFTET.

Positions 1025 to 1048 (STKEESSPTREETSSIKEKTFTET) are disordered.

The protein belongs to the asfivirus F1055L family.

Its function is as follows. May be involved in DNA replication. This is Putative helicase/primase complex protein from African swine fever virus (isolate Pig/Kenya/KEN-50/1950) (ASFV).